The sequence spans 289 residues: Pseudouridine-5'-phosphate glycosidase (289 aa).

The Proton donor role is filled by E10. Substrate-binding residues include K71 and V91. D121 contributes to the Mn(2+) binding site. Substrate is bound at residue 123 to 125; sequence SQD. Catalysis depends on K142, which acts as the Nucleophile.

The protein belongs to the pseudouridine-5'-phosphate glycosidase family. In terms of assembly, homotrimer. Mn(2+) is required as a cofactor.

The catalysed reaction is D-ribose 5-phosphate + uracil = psi-UMP + H2O. Its function is as follows. Catalyzes the reversible cleavage of pseudouridine 5'-phosphate (PsiMP) to ribose 5-phosphate and uracil. Functions biologically in the cleavage direction, as part of a pseudouridine degradation pathway. The protein is Pseudouridine-5'-phosphate glycosidase of Kosmotoga olearia (strain ATCC BAA-1733 / DSM 21960 / TBF 19.5.1).